The sequence spans 245 residues: 5-oxoprolinase subunit A (245 aa).

It belongs to the LamB/PxpA family. As to quaternary structure, forms a complex composed of PxpA, PxpB and PxpC.

It carries out the reaction 5-oxo-L-proline + ATP + 2 H2O = L-glutamate + ADP + phosphate + H(+). Functionally, catalyzes the cleavage of 5-oxoproline to form L-glutamate coupled to the hydrolysis of ATP to ADP and inorganic phosphate. This Yersinia pseudotuberculosis serotype O:1b (strain IP 31758) protein is 5-oxoprolinase subunit A.